A 268-amino-acid polypeptide reads, in one-letter code: Bidirectional sugar transporter N3 (268 aa).

Over 1-7 the chain is Extracellular; the sequence is MAISHNT. A helical transmembrane segment spans residues 8–28; it reads LAFTFGMLGNVISFLVFLAPI. Residues 10–96 enclose the MtN3/slv 1 domain; it reads FTFGMLGNVI…ILYIIYAPRD (87 aa). Over 29–42 the chain is Cytoplasmic; it reads STFYRIYKKKSTEG. Residues 43–63 traverse the membrane as a helical segment; it reads FQSLPYLVALFSSMLWLYYAL. The Extracellular portion of the chain corresponds to 64 to 70; that stretch reads LKKDAFL. A helical membrane pass occupies residues 71–91; that stretch reads LITINSFGCVVETIYIILYII. The Cytoplasmic segment spans residues 92-103; it reads YAPRDARNLTFK. The chain crosses the membrane as a helical span at residues 104–124; that stretch reads LLSAMNVGSFALILIVTNYAV. Over 125–131 the chain is Extracellular; it reads HGPLRVQ. The MtN3/slv 2 domain maps to 131 to 214; that stretch reads QVLGWVCVSL…QMLLYAIYRN (84 aa). Residues 132–152 form a helical membrane-spanning segment; sequence VLGWVCVSLSVSVFAAPLSIV. Residues 153-165 are Cytoplasmic-facing; the sequence is AQVVRTKSVEFMP. The helical transmembrane segment at 166–186 threads the bilayer; sequence FNLSFTLTLSATMWFGYGFFL. The Extracellular segment spans residues 187 to 190; sequence KDIC. A helical membrane pass occupies residues 191–211; it reads IXLPNVLGXVLGLLQMLLYAI. The Cytoplasmic portion of the chain corresponds to 212–268; it reads YRNGGEKAMKKEKKAPIEPPKSIVIETQLEKIEQEKKNKDDDNEEKDKSEEPIGCGV. Residues 234-262 adopt a coiled-coil conformation; sequence IVIETQLEKIEQEKKNKDDDNEEKDKSEE. Positions 243–262 are enriched in basic and acidic residues; it reads IEQEKKNKDDDNEEKDKSEE. Residues 243 to 268 form a disordered region; the sequence is IEQEKKNKDDDNEEKDKSEEPIGCGV.

Belongs to the SWEET sugar transporter family. As to quaternary structure, forms homooligomers and/or heterooligomers.

It is found in the cell membrane. Its function is as follows. Mediates both low-affinity uptake and efflux of sugar across the plasma membrane. This is Bidirectional sugar transporter N3 (N3) from Medicago truncatula (Barrel medic).